The sequence spans 407 residues: Proteasome-activating nucleotidase (407 aa).

Positions lysine 22–isoleucine 67 form a coiled coil. ATP contacts are provided by residues glycine 192 to leucine 197 and histidine 331. The interval methionine 405–glycine 407 is docks into pockets in the proteasome alpha-ring to cause gate opening.

It belongs to the AAA ATPase family. Homohexamer. The hexameric complex has a two-ring architecture resembling a top hat that caps the 20S proteasome core at one or both ends. Upon ATP-binding, the C-terminus of PAN interacts with the alpha-rings of the proteasome core by binding to the intersubunit pockets.

It is found in the cytoplasm. In terms of biological role, ATPase which is responsible for recognizing, binding, unfolding and translocation of substrate proteins into the archaeal 20S proteasome core particle. Is essential for opening the gate of the 20S proteasome via an interaction with its C-terminus, thereby allowing substrate entry and access to the site of proteolysis. Thus, the C-termini of the proteasomal ATPase function like a 'key in a lock' to induce gate opening and therefore regulate proteolysis. Unfolding activity requires energy from ATP hydrolysis, whereas ATP binding alone promotes ATPase-20S proteasome association which triggers gate opening, and supports translocation of unfolded substrates. In Methanococcus maripaludis (strain DSM 14266 / JCM 13030 / NBRC 101832 / S2 / LL), this protein is Proteasome-activating nucleotidase.